The primary structure comprises 397 residues: 1-deoxy-D-xylulose 5-phosphate reductoisomerase (397 aa).

NADPH is bound by residues threonine 17, glycine 18, serine 19, isoleucine 20, asparagine 47, and asparagine 130. 1-deoxy-D-xylulose 5-phosphate is bound at residue lysine 131. Glutamate 132 is a binding site for NADPH. Aspartate 156 is a Mn(2+) binding site. 1-deoxy-D-xylulose 5-phosphate-binding residues include serine 157, glutamate 158, serine 182, and histidine 205. Glutamate 158 serves as a coordination point for Mn(2+). Residue glycine 211 coordinates NADPH. 1-deoxy-D-xylulose 5-phosphate-binding residues include serine 218, asparagine 223, lysine 224, and glutamate 227. Residue glutamate 227 participates in Mn(2+) binding.

The protein belongs to the DXR family. Mg(2+) serves as cofactor. The cofactor is Mn(2+).

It catalyses the reaction 2-C-methyl-D-erythritol 4-phosphate + NADP(+) = 1-deoxy-D-xylulose 5-phosphate + NADPH + H(+). It functions in the pathway isoprenoid biosynthesis; isopentenyl diphosphate biosynthesis via DXP pathway; isopentenyl diphosphate from 1-deoxy-D-xylulose 5-phosphate: step 1/6. Its function is as follows. Catalyzes the NADPH-dependent rearrangement and reduction of 1-deoxy-D-xylulose-5-phosphate (DXP) to 2-C-methyl-D-erythritol 4-phosphate (MEP). The chain is 1-deoxy-D-xylulose 5-phosphate reductoisomerase from Rhizobium rhizogenes (strain K84 / ATCC BAA-868) (Agrobacterium radiobacter).